We begin with the raw amino-acid sequence, 268 residues long: Zinc finger protein SNAI2 (268 aa).

Residues M1–S20 form an SNAG domain region. Positions G84–K116 are disordered. 4 consecutive C2H2-type zinc fingers follow at residues F128–H150, F159–H181, C185–H207, and F213–H235. A C2H2-type 5; atypical zinc finger spans residues Y241–C264.

It belongs to the snail C2H2-type zinc-finger protein family. As to quaternary structure, interacts (via SNAG domain) with LIMD1 (via LIM domains), WTIP (via LIM domains) and AJUBA (via LIM domains). Interacts (via zinc fingers) with KPNA2, KPNB1 and TNPO1. May interact (via zinc fingers) with IPO7. In terms of processing, phosphorylated by GSK3B. Once phosphorylated, it becomes a target for ubiquitination. Ubiquitinated by the SCF(FBXO11) complex; ubiquitination requires previous GSK3B-mediated SNAI2 phosphorylation.

Its subcellular location is the nucleus. The protein resides in the cytoplasm. Its function is as follows. Transcriptional repressor that modulates both activator-dependent and basal transcription. Involved in the generation and migration of neural crest cells. Plays a role in mediating RAF1-induced transcriptional repression of the TJ protein, occludin (OCLN) and subsequent oncogenic transformation of epithelial cells. Represses BRCA2 expression by binding to its E2-box-containing silencer and recruiting CTBP1 and HDAC1 in breast cells. In epidermal keratinocytes, binds to the E-box in ITGA3 promoter and represses its transcription. Involved in the regulation of ITGB1 and ITGB4 expression and cell adhesion and proliferation in epidermal keratinocytes. Binds to E-box2 domain of BSG and activates its expression during TGFB1-induced epithelial-mesenchymal transition (EMT) in hepatocytes. Represses E-Cadherin/CDH1 transcription via E-box elements. Involved in osteoblast maturation. Binds to RUNX2 and SOC9 promoters and may act as a positive and negative transcription regulator, respectively, in osteoblasts. Binds to CXCL12 promoter via E-box regions in mesenchymal stem cells and osteoblasts. Plays an essential role in TWIST1-induced EMT and its ability to promote invasion and metastasis. The chain is Zinc finger protein SNAI2 (Snai2) from Rattus norvegicus (Rat).